Here is a 258-residue protein sequence, read N- to C-terminus: Glycerol-3-phosphate acyltransferase (258 aa).

A run of 6 helical transmembrane segments spans residues 11-31, 62-82, 94-114, 124-144, 160-180, and 212-232; these read IILASVIGYFLGSISWSIIIV, LVVAFLDALKVVFTAIVAILL, SYFIPCIFALIGHCYPIYYKF, LGLLFVVNVLYLIIFLIIWFI, ALIILLIMWIPYLSGVSYFIW, and WASGILEGNIIILIGGLILAW.

The protein belongs to the PlsY family. Probably interacts with PlsX.

It localises to the cell membrane. The enzyme catalyses an acyl phosphate + sn-glycerol 3-phosphate = a 1-acyl-sn-glycero-3-phosphate + phosphate. The protein operates within lipid metabolism; phospholipid metabolism. In terms of biological role, catalyzes the transfer of an acyl group from acyl-phosphate (acyl-PO(4)) to glycerol-3-phosphate (G3P) to form lysophosphatidic acid (LPA). This enzyme utilizes acyl-phosphate as fatty acyl donor, but not acyl-CoA or acyl-ACP. This is Glycerol-3-phosphate acyltransferase from Mycoplasma mycoides subsp. mycoides SC (strain CCUG 32753 / NCTC 10114 / PG1).